The primary structure comprises 105 residues: MLVGYIFLTIAICSESIGAAMLKVSDGFKKWKPSALVVIAYSLAFYMLSLTLNHIPLSLSYATWSGVGTVLTAVIGVKWFKEELNAKGLIGILLLISGVVLLNWQ.

4 consecutive transmembrane segments (helical) span residues 2 to 22, 35 to 55, 57 to 77, and 84 to 104; these read LVGYIFLTIAICSESIGAAML, ALVVIAYSLAFYMLSLTLNHI, LSLSYATWSGVGTVLTAVIGV, and LNAKGLIGILLLISGVVLLNW.

The protein belongs to the drug/metabolite transporter (DMT) superfamily. Small multidrug resistance (SMR) (TC 2.A.7.1) family. EbrA/EbrB subfamily. As to quaternary structure, the efflux pump is composed of EbrA and EbrB.

The protein localises to the cell membrane. Its function is as follows. Part of a multidrug efflux pump. Confers resistance to cationic lipophilic dyes such as ethidium bromide, acriflavine, pyronine Y and safranin O. The efflux is probably coupled to an influx of protons. The protein is Multidrug resistance protein EbrA (ebrA) of Bacillus atrophaeus.